We begin with the raw amino-acid sequence, 884 residues long: Cadherin-1 (884 aa).

The N-terminal stretch at 1–23 (MGARCRSFSALLLLLQVSSWLCQ) is a signal peptide. Residues 24-156 (ELEPESCSPG…VYPGLRRQKR (133 aa)) constitute a propeptide that is removed on maturation. Residues 119–139 (KSMGHHHHRHHHRDPASESNP) are disordered. The span at 121–131 (MGHHHHRHHHR) shows a compositional bias: basic residues. Cadherin domains lie at 157-264 (DWVI…RPEF), 265-377 (TQEV…APVF), 378-488 (NPST…APIF), 489-595 (MPAE…DNAP), and 596-699 (IPEP…NCMK). The Extracellular portion of the chain corresponds to 157–709 (DWVIPPISCP…AGIVAAGLQV (553 aa)). Residue Asp-259 participates in Ca(2+) binding. Ser-282 and Ser-287 each carry an O-linked (Man...) serine glycan. Asp-290 contributes to the Ca(2+) binding site. Thr-360, Thr-472, Thr-474, and Thr-511 each carry an O-linked (Man...) threonine glycan. A glycan (N-linked (GlcNAc...) asparagine) is linked at Asn-560. 3 O-linked (Man...) threonine glycosylation sites follow: Thr-578, Thr-580, and Thr-582. N-linked (GlcNAc...) asparagine glycosylation is present at Asn-639. Residues 710 to 733 (PAILGILGGILALLILILLLLLFL) form a helical membrane-spanning segment. Over 734–884 (RRRTVVKEPL…ADMYGGGEDD (151 aa)) the chain is Cytoplasmic. A disordered region spans residues 749–808 (DTRDNVYYYDEEGGGEEDQDFDLSQLHRGLDARPEVTRNDVAPTLMSVPQYRPRPANPDE). Phosphotyrosine; by SRC occurs at positions 755, 756, and 757. A compositionally biased stretch (acidic residues) spans 757–769 (YDEEGGGEEDQDF). The segment at 760–771 (EGGGEEDQDFDL) is required for binding CTNND1 and PSEN1. Ser-772 is subject to Phosphoserine. Positions 776 to 786 (RGLDARPEVTR) are enriched in basic and acidic residues. Phosphoserine is present on residues Ser-795, Ser-840, Ser-842, and Ser-848. Positions 813–884 (IDENLKAADS…ADMYGGGEDD (72 aa)) are required for binding alpha, beta and gamma catenins.

As to quaternary structure, homodimer; disulfide-linked. Component of an E-cadherin/ catenin adhesion complex composed of at least E-cadherin/CDH1, beta-catenin/CTNNB1 or gamma-catenin/JUP, and potentially alpha-catenin/CTNNA1; the complex is located to adherens junctions. Found in a complex composed of CDH1, RAP1A and PKP3; PKP3 acts as a scaffold protein within the complex, the complex is required for CDH1 localization to mature desmosome cell junctions. Interacts with the TRPV4 and CTNNB1 complex. Interacts with CTNND1. The stable association of CTNNA1 is controversial as CTNNA1 was shown not to bind to F-actin when assembled in the complex. Alternatively, the CTNNA1-containing complex may be linked to F-actin by other proteins such as LIMA1. Interaction with PSEN1, cleaves CDH1 resulting in the disassociation of cadherin-based adherens junctions (CAJs). Interacts with AJAP1 and DLGAP5. Interacts with TBC1D2. Interacts with LIMA1. Interacts with CAV1. Interacts with PIP5K1C. Interacts with RAB8B. Interacts with DDR1; this stabilizes CDH1 at the cell surface and inhibits its internalization. Interacts with RAPGEF2. Interacts with KLRG1. Forms a ternary complex composed of ADAM10, CADH1 and EPHA4; within the complex, CADH1 is cleaved by ADAM10 which disrupts adherens junctions. Interacts with SPEF1. Interacts with CTNNB1 and PKP2. Interacts with AMOTL2; the interaction may facilitate binding of radial actin fibers to cell junction complexes. Interacts with DSG3; the interaction is required for CDH1 localization to developing adherens junctions. During apoptosis or with calcium influx, cleaved by a membrane-bound metalloproteinase (ADAM10), PS1/gamma-secretase and caspase-3. Processing by the metalloproteinase, induced by calcium influx, causes disruption of cell-cell adhesion and the subsequent release of beta-catenin into the cytoplasm. The residual membrane-tethered cleavage product is rapidly degraded via an intracellular proteolytic pathway. Cleavage by caspase-3 releases the cytoplasmic tail resulting in disintegration of the actin microfilament system. The gamma-secretase-mediated cleavage promotes disassembly of adherens junctions. During development of the cochlear organ of Corti, cleavage by ADAM10 at adherens junctions promotes pillar cell separation. In terms of processing, O-glycosylated. O-manosylated by TMTC1, TMTC2, TMTC3 or TMTC4. Ser-287 and Thr-511 are O-manosylated by TMTC2 or TMTC4 but not TMTC1 or TMTC3. Post-translationally, N-glycosylation at Asn-639 is essential for expression, folding and trafficking. Addition of bisecting N-acetylglucosamine by MGAT3 modulates its cell membrane location. Ubiquitinated by a SCF complex containing SKP2, which requires prior phosphorylation by CK1/CSNK1A1. Ubiquitinated by CBLL1/HAKAI, requires prior phosphorylation at Tyr-756. Expressed in inner and outer pillar cells of the organ of Corti (at protein level). Expressed in granuloma macrophages (at protein level). Expressed in the epidermal keratinocytes of the skin from birth (at protein level). Expressed in non-neural epithelial tissues.

The protein resides in the cell junction. It is found in the adherens junction. It localises to the cell membrane. The protein localises to the endosome. Its subcellular location is the golgi apparatus. The protein resides in the trans-Golgi network. It is found in the cytoplasm. It localises to the desmosome. Cadherins are calcium-dependent cell adhesion proteins. They preferentially interact with themselves in a homophilic manner in connecting cells; cadherins may thus contribute to the sorting of heterogeneous cell types. CDH1 is involved in mechanisms regulating cell-cell adhesions, mobility and proliferation of epithelial cells. Promotes organization of radial actin fiber structure and cellular response to contractile forces, via its interaction with AMOTL2 which facilitates anchoring of radial actin fibers to CDH1 junction complexes at the cell membrane. Plays a role in the early stages of desmosome cell-cell junction formation via facilitating the recruitment of DSG2 and DSP to desmosome plaques. Has a potent invasive suppressor role. It is a ligand for integrin alpha-E/beta-7. Functionally, E-Cad/CTF2 promotes non-amyloidogenic degradation of Abeta precursors. Has a strong inhibitory effect on APP C99 and C83 production. In terms of biological role, (Microbial infection) Does not function as a receptor for L.monocytogenes internalin A (InlA); mutating a single surface-exposed residue confers receptor activity to this protein and promotes uptake of the bacteria. This Mus musculus (Mouse) protein is Cadherin-1 (Cdh1).